Reading from the N-terminus, the 351-residue chain is Leukotriene B4 receptor 1 (351 aa).

Over 1–21 (MAANTTSPAAPSSPGGMSLSL) the chain is Extracellular. The N-linked (GlcNAc...) asparagine glycan is linked to Asn4. The chain crosses the membrane as a helical span at residues 22–44 (LPIVLLSVALAVGLPGNSFVVWS). The Cytoplasmic portion of the chain corresponds to 45–56 (ILKRMQKRTVTA). Residues 57-77 (LLVLNLALADLAVLLTAPFFL) traverse the membrane as a helical segment. Residues 78–93 (HFLARGTWSFREMGCR) lie on the Extracellular side of the membrane. A helical transmembrane segment spans residues 94 to 115 (LCHYVCGISMYASVLLITIMSL). Residues 116 to 140 (DRSLAVARPFMSQKVRTKAFARWVL) lie on the Cytoplasmic side of the membrane. A helical membrane pass occupies residues 141–161 (AGIWVVSFLLAIPVLVYRTVK). The Extracellular segment spans residues 162–179 (WNNRTLICAPNYPNKEHK). A glycan (N-linked (GlcNAc...) asparagine) is linked at Asn164. A helical membrane pass occupies residues 180–200 (VFHLLFEAITGFLLPFLAVVA). Topologically, residues 201–222 (SYSDIGRRLQARRFRRSRRTGR) are cytoplasmic. A helical membrane pass occupies residues 223 to 243 (LVVLIILAFAAFWLPYHLVNL). Topologically, residues 244–268 (VEAGRTVAGWDKNSPAGQRLRLARY) are extracellular. A helical transmembrane segment spans residues 269–289 (VLIALAFLSSSVNPVLYACAG). The Cytoplasmic segment spans residues 290-351 (GGLLRSAGVG…TSSTIPESSK (62 aa)). 2 stretches are compositionally biased toward polar residues: residues 311–326 (EVSSTRRGGTLVQTPK) and 339–351 (SFMTSSTIPESSK). The interval 311–351 (EVSSTRRGGTLVQTPKDTPACPEPGPTDSFMTSSTIPESSK) is disordered.

It belongs to the G-protein coupled receptor 1 family. In terms of processing, phosphorylated by GRK6 upon leukotriene B4 binding; which promotes desensitization. Highly expressed on activated leukocytes, including eosinophils.

It is found in the cell membrane. Receptor for leukotriene B4, a potent chemoattractant involved in inflammation and immune response. The chain is Leukotriene B4 receptor 1 (Ltb4r) from Mus musculus (Mouse).